Here is a 366-residue protein sequence, read N- to C-terminus: Ribosomal RNA large subunit methyltransferase M (366 aa).

S-adenosyl-L-methionine-binding positions include serine 188, 221–224 (CPGG), aspartate 240, aspartate 260, and aspartate 277. The Proton acceptor role is filled by lysine 306.

It belongs to the class I-like SAM-binding methyltransferase superfamily. RNA methyltransferase RlmE family. RlmM subfamily. As to quaternary structure, monomer.

It localises to the cytoplasm. It carries out the reaction cytidine(2498) in 23S rRNA + S-adenosyl-L-methionine = 2'-O-methylcytidine(2498) in 23S rRNA + S-adenosyl-L-homocysteine + H(+). Functionally, catalyzes the 2'-O-methylation at nucleotide C2498 in 23S rRNA. The sequence is that of Ribosomal RNA large subunit methyltransferase M from Cronobacter sakazakii (strain ATCC BAA-894) (Enterobacter sakazakii).